We begin with the raw amino-acid sequence, 1642 residues long: Cholesterol transporter ABCA5 (1642 aa).

Residues 32 to 52 (SVQEILFPLFFLFWLILVSMM) traverse the membrane as a helical segment. N-linked (GlcNAc...) asparagine glycosylation is present at N86. Helical transmembrane passes span 220 to 240 (VILI…AIHI), 264 to 284 (LSWV…MAVI), 297 to 317 (IVIF…ALML), 328 to 348 (GVVE…IVLI), and 355 to 375 (LVWL…AQVM). An N-linked (GlcNAc...) asparagine glycan is attached at N388. The chain crosses the membrane as a helical span at residues 396 to 416 (LIITIIMLALDSVFYVLLAVY). The N-linked (GlcNAc...) asparagine glycan is linked to N458. In terms of domain architecture, ABC transporter 1 spans 478 to 713 (IRISGIQKSY…WGIGYRLSMY (236 aa)). 514-521 (GHSGTGKS) provides a ligand contact to ATP. The chain crosses the membrane as a helical span at residues 864–884 (AVLLLLLIFFAVQIFMFFLHH). A glycan (N-linked (GlcNAc...) asparagine) is linked at N919. A helical membrane pass occupies residues 967–987 (VFSAVFNSTMVYCLPVMMNII). N996 carries an N-linked (GlcNAc...) asparagine glycan. A run of 6 helical transmembrane segments spans residues 1021–1041 (LYFQ…YFAM), 1071–1091 (VVDI…LFAF), 1102–1122 (FLAV…FTYI), 1138–1158 (SFIY…TFFL), 1164–1184 (AVFH…GCLI), and 1207–1227 (LLVA…LLQH). Residues 1290 to 1533 (IMVCNLHKEY…FGKGYFLEIK (244 aa)) form the ABC transporter 2 domain. 1333 to 1340 (GPNGAGKS) provides a ligand contact to ATP.

The protein belongs to the ABC transporter superfamily. ABCA family. N-glycosylated. As to expression, expressed in cardiomyocytes, oligodendrocytes and astrocytes in brain, alveolar type 2 cells in lung and follicular cells in the thyroid gland (at protein level). Detected in brain, testis, lung, heart, liver, kidney, skeletal muscle and placenta. Strongly expressed in the basal cells of the seminiferous tubules, interstitial cells consisting of Leydig cells, as well as the tunica albuginea. In the epididymis, specifically and very strongly expressed in the connective tissue outlining the cylindrical epithelium in the corpus and cauda regions, including fibrocytes and smooth muscle cells, as well as within the basal and tall columnar cells of the corpus cylindrical epithelium. Highly expressed in the brain with high expression in cortical and hippocampal neurons and moderately in the lung.

It localises to the golgi apparatus membrane. Its subcellular location is the lysosome membrane. It is found in the late endosome membrane. The protein localises to the cell membrane. It carries out the reaction cholesterol(in) + ATP + H2O = cholesterol(out) + ADP + phosphate + H(+). In terms of biological role, cholesterol efflux transporter in macrophages that is responsible for APOAI/high-density lipoproteins (HDL) formation at the plasma membrane under high cholesterol levels and participates in reverse cholesterol transport. May play a role in the processing of autolysosomes. This Mus musculus (Mouse) protein is Cholesterol transporter ABCA5.